Reading from the N-terminus, the 693-residue chain is Periplasmic alpha-galactoside-binding protein (693 aa).

An N-terminal signal peptide occupies residues 1 to 20; it reads MKTHRLNMTASLLIGISAFA.

It belongs to the bacterial solute-binding protein 5 family.

The protein localises to the periplasm. Involved in the transport of alpha-galactosides. Required for the utilization of raffinose and melibiose. Probably acts as a periplasmic substrate-binding protein for a transport system. This Rhizobium meliloti (strain 1021) (Ensifer meliloti) protein is Periplasmic alpha-galactoside-binding protein.